Consider the following 734-residue polypeptide: Diacylglycerol kinase alpha (734 aa).

EF-hand domains follow at residues 109–144 and 154–189; these read RPED…MMRM and ELRP…TVPL. Ca(2+)-binding residues include aspartate 122, aspartate 124, asparagine 126, glutamate 133, aspartate 167, aspartate 169, serine 171, serine 173, and glutamate 178. 2 Phorbol-ester/DAG-type zinc fingers span residues 204–252 and 268–318; these read QHMW…ALPC and SHVW…GHEC. A DAGKc domain is found at 371–505; it reads SNTHPLLVFV…MDRWSVEVIP (135 aa). Lysine 483 is subject to N6-acetyllysine.

This sequence belongs to the eukaryotic diacylglycerol kinase family. In terms of assembly, monomer.

The protein resides in the cytoplasm. It localises to the cytosol. It catalyses the reaction a 1,2-diacyl-sn-glycerol + ATP = a 1,2-diacyl-sn-glycero-3-phosphate + ADP + H(+). It carries out the reaction a 1-O-alkyl-sn-glycerol + ATP = a 1-O-alkyl-sn-glycero-3-phosphate + ADP + H(+). The catalysed reaction is 1-O-alkyl-2-acyl-sn-glycerol + ATP = 1-O-alkyl-2-acyl-sn-glycero-3-phosphate + ADP + H(+). The enzyme catalyses 1,2-dihexadecanoyl-sn-glycerol + ATP = 1,2-dihexadecanoyl-sn-glycero-3-phosphate + ADP + H(+). It catalyses the reaction 1-hexadecanoyl-2-(9Z-octadecenoyl)-sn-glycerol + ATP = 1-hexadecanoyl-2-(9Z-octadecenoyl)-sn-glycero-3-phosphate + ADP + H(+). It carries out the reaction 2-(9Z-octadecenoyl)-glycerol + ATP = 2-(9Z-octadecenoyl)-sn-glycero-3-phosphate + ADP + H(+). The catalysed reaction is 1,2-di-(9Z-octadecenoyl)-sn-glycerol + ATP = 1,2-di-(9Z-octadecenoyl)-sn-glycero-3-phosphate + ADP + H(+). The enzyme catalyses 1-octadecanoyl-2-(5Z,8Z,11Z,14Z-eicosatetraenoyl)-sn-glycerol + ATP = 1-octadecanoyl-2-(5Z,8Z,11Z,14Z-eicosatetraenoyl)-sn-glycero-3-phosphate + ADP + H(+). It catalyses the reaction 1,2-didecanoyl-sn-glycerol + ATP = 1,2-didecanoyl-sn-glycero-3-phosphate + ADP + H(+). It carries out the reaction 1-O-hexadecyl-2-acetyl-sn-glycerol + ATP = 1-O-hexadecyl-2-acetyl-sn-glycero-3-phosphate + ADP + H(+). The catalysed reaction is 1-O-hexadecyl-2-(5Z,8Z,11Z,14Z-eicosatetraenoyl)-sn-glycerol + ATP = 1-O-hexadecyl-2-(5Z,8Z,11Z,14Z-eicosatetraenoyl)-sn-glycero-3-phosphate + ADP + H(+). The enzyme catalyses 1-O-hexadecyl-2-(9Z-octadecenoyl)-sn-glycerol + ATP = 1-O-hexadecyl-2-(9Z-octadecenoyl)-sn-glycero-3-phosphate + ADP + H(+). It catalyses the reaction 1-O-hexadecyl-sn-glycerol + ATP = 1-O-hexadecyl-sn-glycero-3-phosphate + ADP + H(+). It functions in the pathway lipid metabolism; glycerolipid metabolism. With respect to regulation, stimulated by calcium and phosphatidylserine. Its function is as follows. Diacylglycerol kinase that converts diacylglycerol/DAG into phosphatidic acid/phosphatidate/PA and regulates the respective levels of these two bioactive lipids. Thereby, acts as a central switch between the signaling pathways activated by these second messengers with different cellular targets and opposite effects in numerous biological processes. Also plays an important role in the biosynthesis of complex lipids. Can also phosphorylate 1-alkyl-2-acylglycerol in vitro as efficiently as diacylglycerol provided it contains an arachidonoyl group. Also involved in the production of alkyl-lysophosphatidic acid, another bioactive lipid, through the phosphorylation of 1-alkyl-2-acetyl glycerol. The protein is Diacylglycerol kinase alpha (DGKA) of Bos taurus (Bovine).